The chain runs to 224 residues: Adenosylcobinamide-GDP ribazoletransferase (224 aa).

A run of 4 helical transmembrane segments spans residues 21–41 (LSFK…AAIP), 44–64 (LLYL…ATGL), 97–117 (GGIF…HSPL), and 156–176 (WPAA…TTAV).

It belongs to the CobS family. Requires Mg(2+) as cofactor.

The protein resides in the cell membrane. The enzyme catalyses alpha-ribazole + adenosylcob(III)inamide-GDP = adenosylcob(III)alamin + GMP + H(+). It carries out the reaction alpha-ribazole 5'-phosphate + adenosylcob(III)inamide-GDP = adenosylcob(III)alamin 5'-phosphate + GMP + H(+). Its pathway is cofactor biosynthesis; adenosylcobalamin biosynthesis; adenosylcobalamin from cob(II)yrinate a,c-diamide: step 7/7. Joins adenosylcobinamide-GDP and alpha-ribazole to generate adenosylcobalamin (Ado-cobalamin). Also synthesizes adenosylcobalamin 5'-phosphate from adenosylcobinamide-GDP and alpha-ribazole 5'-phosphate. In Pyrobaculum aerophilum (strain ATCC 51768 / DSM 7523 / JCM 9630 / CIP 104966 / NBRC 100827 / IM2), this protein is Adenosylcobinamide-GDP ribazoletransferase.